A 400-amino-acid polypeptide reads, in one-letter code: Protein TFG (400 aa).

Met-1 is modified (N-acetylmethionine). One can recognise a PB1 domain in the interval 10–91; sequence KLIIKAQLGE…RILKLTLFVN (82 aa). Ser-50 is modified (phosphoserine). Positions 97-124 form a coiled coil; the sequence is LESSQVKYLRRELIELRNKVNRLLDSLE. Disordered stretches follow at residues 120-160 and 187-400; these read LDSL…STQV and LTDD…PGYR. Over residues 150–160 the composition is skewed to polar residues; sequence SDSSGKQSTQV. The residue at position 197 (Ser-197) is a Phosphoserine. Low complexity-rich tracts occupy residues 237–258, 265–298, and 307–327; these read GQIE…AQQP, PQQY…PTSQ, and QPQQ…YPAQ. Positions 328 to 340 are enriched in polar residues; that stretch reads TYTAQTSQPTNYT. Residues Arg-385 and Arg-400 each carry the omega-N-methylarginine modification.

Self-associates to form an oligomeric complex. Interacts with PDCD6; promoting localization and polymerization of TFG at endoplasmic reticulum exit site. Interacts with SEC16B. Ubiquitous.

The protein localises to the endoplasmic reticulum. Functionally, plays a role in the normal dynamic function of the endoplasmic reticulum (ER) and its associated microtubules. Required for secretory cargo traffic from the endoplasmic reticulum to the Golgi apparatus. The chain is Protein TFG (TFG) from Homo sapiens (Human).